A 228-amino-acid polypeptide reads, in one-letter code: Ribose-5-phosphate isomerase A (228 aa).

Substrate contacts are provided by residues 28-31 (TGST), 84-87 (DGAD), and 97-100 (KGGG). The active-site Proton acceptor is glutamate 106. Lysine 124 lines the substrate pocket.

It belongs to the ribose 5-phosphate isomerase family. In terms of assembly, homodimer.

It catalyses the reaction aldehydo-D-ribose 5-phosphate = D-ribulose 5-phosphate. Its pathway is carbohydrate degradation; pentose phosphate pathway; D-ribose 5-phosphate from D-ribulose 5-phosphate (non-oxidative stage): step 1/1. Functionally, catalyzes the reversible conversion of ribose-5-phosphate to ribulose 5-phosphate. The sequence is that of Ribose-5-phosphate isomerase A from Levilactobacillus brevis (strain ATCC 367 / BCRC 12310 / CIP 105137 / JCM 1170 / LMG 11437 / NCIMB 947 / NCTC 947) (Lactobacillus brevis).